The sequence spans 414 residues: Esterase FrsA (414 aa).

The protein belongs to the FrsA family.

The enzyme catalyses a carboxylic ester + H2O = an alcohol + a carboxylate + H(+). Its function is as follows. Catalyzes the hydrolysis of esters. The chain is Esterase FrsA from Escherichia coli O139:H28 (strain E24377A / ETEC).